The chain runs to 245 residues: Chloride intracellular channel protein 2 (245 aa).

The segment at 1–96 (MASLALNTQA…EEFLEKTLAP (96 aa)) is required for insertion into the membrane. Glutamate 25 contacts glutathione. A G-site motif is present at residues 30–33 (CPFC). Cysteines 30 and 33 form a disulfide. The chain crosses the membrane as a helical span at residues 32–52 (FCQRLFMILWLKGVKFNVTTI). The GST C-terminal domain occupies 76–239 (NKELKTDFIK…PEDKEIENTY (164 aa)). Histidine 227 serves as a coordination point for glutathione.

It belongs to the chloride channel CLIC family. In terms of assembly, monomer. Interacts with TRAPPC2 and RYR2.

The protein resides in the cytoplasm. It is found in the membrane. It catalyses the reaction chloride(in) = chloride(out). It carries out the reaction tert-butyl hydroperoxide + 2 glutathione = tert-butanol + glutathione disulfide + H2O. The catalysed reaction is cumene hydroperoxide + 2 glutathione = 2-phenylpropan-2-ol + glutathione disulfide + H2O. Functionally, in the soluble state, catalyzes glutaredoxin-like thiol disulfide exchange reactions with reduced glutathione as electron donor. Displays weak glutathione peroxidase activity. Can insert into membranes and form chloride ion channels. Membrane insertion seems to be redox-regulated and may occur only under oxidizing conditions. Modulates the activity of RYR2 and inhibits calcium influx. This is Chloride intracellular channel protein 2 from Rattus norvegicus (Rat).